A 696-amino-acid polypeptide reads, in one-letter code: Zinc finger SWIM domain-containing protein 3 (696 aa).

The segment at 531 to 572 (VDVQLLEDSHQVSKDGCSCSCSFQQWYHLPCRHILALLHTSQ) adopts an SWIM-type zinc-finger fold.

The protein is Zinc finger SWIM domain-containing protein 3 (ZSWIM3) of Homo sapiens (Human).